Reading from the N-terminus, the 967-residue chain is uncharacterized protein (967 aa).

2 disordered regions span residues 1-23 (MQNA…FHDR) and 41-72 (FTMH…DPRT). Positions 14–23 (KGRDVNFHDR) are enriched in basic and acidic residues. Polar residues predominate over residues 60–72 (RLSNYSSAVDPRT). At Ser86 the chain carries Phosphoserine. Disordered regions lie at residues 135–259 (AVSE…QHLP), 271–296 (SVSR…SPPE), 380–399 (DSTT…APHK), 437–464 (HSYG…FVAD), and 499–544 (GTRF…KSLS). Polar residues predominate over residues 162-187 (ESSTSNNLETGNSTNTALHNVSSPLE). A compositionally biased stretch (basic and acidic residues) spans 205–218 (HDLDEVISEKDTSL). Positions 221-234 (RSSRGRSSAPKRRK) are enriched in basic residues. Positions 278 to 294 (SPASTPRSSVSSVSSSP) are enriched in low complexity. Residues 382–394 (TTEYVNTESSSKT) show a composition bias toward polar residues. Basic residues predominate over residues 499 to 508 (GTRFHSRSSH). Ser585 carries the post-translational modification Phosphoserine. Disordered regions lie at residues 594–665 (ESNE…SVND) and 681–708 (DHRI…ESQH). Over residues 608–622 (YDSRESTGHTIKELR) the composition is skewed to basic and acidic residues. The span at 686–704 (ASDNQNNNNNDANALAENS) shows a compositional bias: low complexity. 728 to 736 (PCVLDVKMG) is a binding site for substrate.

Belongs to the inositol phosphokinase (IPK) family.

The protein localises to the cytoplasm. This is an uncharacterized protein from Schizosaccharomyces pombe (strain 972 / ATCC 24843) (Fission yeast).